We begin with the raw amino-acid sequence, 803 residues long: MVRPAQVRAFSGLARSATSTRLIPSQCQNALRCASLPGSRLSALPLRATQITSSPLRKWHQIRNASAAATATLAEQAAADPEGLSQEEIISNIDAEEWKRISKVRNIGIAAHIDSGKTTATERVLFYTGRINSIHEVRGRDSVGAKMDSMDLEREKGITIQSAATFCDWVKKEDGKEEKYHFNLIDTPGHIDFTIEVERALRVLDGAVMILCAVSGVQSQTITVDRQMKRYNVPRISFVNKMDRMGANPFKAIDQINSKLRLPAAAVQVPIGAEDEFQGVVDLIRMKAIYNEGPRGEVIVEKDEIPEHLKPVAEERRRILIETLADVDDEIAEIFLDEREPTNEQIKDAIRRATIALKFTPVFMGSALADKSIQPMLDGVCDYLPNPSEVTNLALDQKRKEAQVKLLPYGSEPFVGLAFKLEESNFGQLTYIRVYQGTLRKGANVFNARNDKKVKVPRIVRMHSNEMEEVQEIGAGEICAVFGVDCASGDTFTDGQLAYTMSSMFVPEPVISLSIKPKNNKDSANFSKAMARFQREDPTFRVSYDAESEQTIISGMGELHLDIYVERMRREYKVDCETGQPQVAYRETIGRRVEFDHLLKKQSGGPGDYARVVGWMEPSDSLEENKFEEQIVGGAISEKFLFACEKGFNLATEKGPLIGHKVLGTKMVINDGATHMTDSSEMSFKNATQQAFRKAFMESQPHVLEPLMKTVVTAPIEFQGDVIGLLNKRNATINDSEIGVDEFTVYADCSLNGMFGFSSHLRAATQGKGEYTMEFSHYEKAPGQLQKELVQKYLKAQADRHKK.

A mitochondrion-targeting transit peptide spans 1 to 24 (MVRPAQVRAFSGLARSATSTRLIP). Residues 102–388 (SKVRNIGIAA…GVCDYLPNPS (287 aa)) form the tr-type G domain. Residues 111–118 (AHIDSGKT), 186–190 (DTPGH), and 240–243 (NKMD) contribute to the GTP site.

It belongs to the TRAFAC class translation factor GTPase superfamily. Classic translation factor GTPase family. EF-G/EF-2 subfamily.

It is found in the mitochondrion. It functions in the pathway protein biosynthesis; polypeptide chain elongation. Functionally, mitochondrial GTPase that catalyzes the GTP-dependent ribosomal translocation step during translation elongation. During this step, the ribosome changes from the pre-translocational (PRE) to the post-translocational (POST) state as the newly formed A-site-bound peptidyl-tRNA and P-site-bound deacylated tRNA move to the P and E sites, respectively. Catalyzes the coordinated movement of the two tRNA molecules, the mRNA and conformational changes in the ribosome. In Talaromyces marneffei (strain ATCC 18224 / CBS 334.59 / QM 7333) (Penicillium marneffei), this protein is Elongation factor G, mitochondrial (mef1).